The sequence spans 686 residues: Potassium-transporting ATPase ATP-binding subunit 2 (686 aa).

A run of 4 helical transmembrane segments spans residues 37-57 (MFVV…PNLF), 64-84 (MILY…FANF), 223-243 (LLVS…PMAI), and 255-275 (VALT…AIGI). Catalysis depends on Asp306, which acts as the 4-aspartylphosphate intermediate. ATP contacts are provided by residues Asp343, Glu347, 376–383 (FTAQTRMS), and Lys395. Asp518 and Asp522 together coordinate Mg(2+). 3 helical membrane passes run 588 to 608 (FAII…LNIM), 616 to 636 (AILS…PLAM), and 656 to 676 (VYGV…DLVI).

The protein belongs to the cation transport ATPase (P-type) (TC 3.A.3) family. Type IA subfamily. In terms of assembly, the system is composed of three essential subunits: KdpA, KdpB and KdpC.

It is found in the cell membrane. The enzyme catalyses K(+)(out) + ATP + H2O = K(+)(in) + ADP + phosphate + H(+). Part of the high-affinity ATP-driven potassium transport (or Kdp) system, which catalyzes the hydrolysis of ATP coupled with the electrogenic transport of potassium into the cytoplasm. This subunit is responsible for energy coupling to the transport system and for the release of the potassium ions to the cytoplasm. This Listeria innocua serovar 6a (strain ATCC BAA-680 / CLIP 11262) protein is Potassium-transporting ATPase ATP-binding subunit 2.